The following is a 152-amino-acid chain: MGLXKSFALFSLLVLVLGWVQPSLSGESRESSADKFKRQHMDPDSPSKSSPTYCNQMMKRQGMTKGSCKRVNTFVHEPLEDVQAICSQGQVTCKNGRNNCYKSSSTLHITECHLKGSSKYPNCDYTTTDSQKHIIIACEGNPLVPVHFDDSV.

Positions 1-25 are cleaved as a signal peptide; it reads MGLXKSFALFSLLVLVLGWVQPSLS. The disordered stretch occupies residues 25 to 53; sequence SGESRESSADKFKRQHMDPDSPSKSSPTY. Over residues 27-45 the composition is skewed to basic and acidic residues; sequence ESRESSADKFKRQHMDPDS. Substrate-binding residues include Lys35 and Arg38. Residue His40 is the Proton acceptor of the active site. Disulfide bonds link Cys54–Cys112, Cys68–Cys123, Cys86–Cys138, and Cys93–Cys100. Residues 69 to 73 and Lys94 each bind substrate; that span reads KRVNT. His147 serves as the catalytic Proton donor.

The protein belongs to the pancreatic ribonuclease family. As to quaternary structure, monomer.

Its subcellular location is the secreted. The catalysed reaction is an [RNA] containing cytidine + H2O = an [RNA]-3'-cytidine-3'-phosphate + a 5'-hydroxy-ribonucleotide-3'-[RNA].. It carries out the reaction an [RNA] containing uridine + H2O = an [RNA]-3'-uridine-3'-phosphate + a 5'-hydroxy-ribonucleotide-3'-[RNA].. Its function is as follows. Endonuclease that catalyzes the cleavage of RNA on the 3' side of pyrimidine nucleotides. Acts on single-stranded and double-stranded RNA. In Rattus tiomanicus (Malayan field rat), this protein is Ribonuclease pancreatic beta-type.